Here is a 543-residue protein sequence, read N- to C-terminus: Ipecoside beta-D-glucosidase IpeGLU1 (543 aa).

A beta-D-glucoside-binding positions include Q36, H140, 185 to 186 (NE), Y350, E422, W471, and F487. The active-site Proton donor is E186. Catalysis depends on E422, which acts as the Nucleophile.

It belongs to the glycosyl hydrolase 1 family. Expressed in roots.

The protein resides in the cytoplasm. Its subcellular location is the cytosol. The catalysed reaction is deacetylipecoside + H2O = deacetylipecoside aglycone + D-glucose. It catalyses the reaction deacetylisoipecoside + H2O = deacetylisoipecoside aglycone + D-glucose. It carries out the reaction 6-O-methyldeacetylipecoside + H2O = 6-O-methyldeacetylipecoside aglycone + D-glucose. The enzyme catalyses 6-O-methyldeacetylisoipecoside + H2O = 6-O-methyldeacetylisoipecoside aglycone + D-glucose. The catalysed reaction is ipecoside + H2O = ipecoside aglycone + D-glucose. It catalyses the reaction 3alpha(S)-strictosidine + H2O = strictosidine aglycone + D-glucose. It participates in alkaloid biosynthesis. Its activity is regulated as follows. Inhibited by Cu(2+), Fe(2+) and Zn(2+). Functionally, beta-glucosidase involved in the biosynthesis of ipecac and benzylisoquinoline monoterpenoid-isoquinoline alkaloids natural products, starting by the condensation of dopamine and secologanin, and including emetine and cephaeline, drugs used both as anti-protozoal (e.g. treatment of ameobiasis) and as emetic agents. In response to pathogen and herbivore attack, triggers the release of toxic ipecoside aglycon to trigger defense responses. Catalyzes deglucosylation both on (1S)-diastereomer and (1R)-diastereomer substrates, including ipecoside, the main alkaloidal glucoside. Also active on N-deacetylisoipecoside, 6-O-methyl-N-deacetylisoipecoside, 6-O-methyl-N-deacetylipecoside and N-deacetylipecoside. The chain is Ipecoside beta-D-glucosidase IpeGLU1 from Carapichea ipecacuanha (Ipecac).